Here is a 216-residue protein sequence, read N- to C-terminus: Histone doublet H4-H3 (216 aa).

Positions 1–12 (MSKAGKKVKAQQ) are enriched in basic residues. A disordered region spans residues 1 to 23 (MSKAGKKVKAQQHGHLADHVSVG).

Its subcellular location is the host nucleus. The protein localises to the host cytoplasm. It localises to the virion. Histone-like protein that is recruited to viral factories during viral replication and participates in viral DNA packaging and virion production probably by forming unstable nucleosome-like particles. May compact the viral DNA. The sequence is that of Histone doublet H4-H3 from Melbournevirus (MelV).